The sequence spans 527 residues: EGF domain-specific O-linked N-acetylglucosamine transferase (527 aa).

Positions 1 to 19 (MLMLLVFGVLLHEVPLSGQ) are cleaved as a signal peptide. The short motif at 295 to 297 (DYD) is the Required for optimal activity element. Residue asparagine 354 is glycosylated (N-linked (GlcNAc...) asparagine). Residues 524-527 (HDEL) carry the Prevents secretion from ER motif.

This sequence belongs to the glycosyltransferase 61 family.

It is found in the endoplasmic reticulum lumen. The enzyme catalyses L-seryl-[protein] + UDP-N-acetyl-alpha-D-glucosamine = 3-O-(N-acetyl-beta-D-glucosaminyl)-L-seryl-[protein] + UDP + H(+). The catalysed reaction is L-threonyl-[protein] + UDP-N-acetyl-alpha-D-glucosamine = 3-O-(N-acetyl-beta-D-glucosaminyl)-L-threonyl-[protein] + UDP + H(+). In terms of biological role, catalyzes the transfer of a single N-acetylglucosamine from UDP-GlcNAc to a serine or threonine residue in extracellular proteins resulting in their modification with a beta-linked N-acetylglucosamine (O-GlcNAc). Specifically glycosylates the Thr residue located between the fifth and sixth conserved cysteines of folded EGF-like domains. The chain is EGF domain-specific O-linked N-acetylglucosamine transferase (Eogt) from Rattus norvegicus (Rat).